The following is a 257-amino-acid chain: NAD kinase (257 aa).

Residue D46 is the Proton acceptor of the active site. Residues 46–47, 116–117, D146, A154, and 157–162 contribute to the NAD(+) site; these read DG, NE, and TAYNLS.

This sequence belongs to the NAD kinase family. Requires a divalent metal cation as cofactor.

Its subcellular location is the cytoplasm. The catalysed reaction is NAD(+) + ATP = ADP + NADP(+) + H(+). In terms of biological role, involved in the regulation of the intracellular balance of NAD and NADP, and is a key enzyme in the biosynthesis of NADP. Catalyzes specifically the phosphorylation on 2'-hydroxyl of the adenosine moiety of NAD to yield NADP. The protein is NAD kinase of Mesorhizobium japonicum (strain LMG 29417 / CECT 9101 / MAFF 303099) (Mesorhizobium loti (strain MAFF 303099)).